The following is a 130-amino-acid chain: Large ribosomal subunit protein bL21 (130 aa).

The disordered stretch occupies residues 103 to 130 (AGGKTSKAEPRKTRKAEPAAESAPAAAE). The segment covering 108–120 (SKAEPRKTRKAEP) has biased composition (basic and acidic residues). Residues 121-130 (AAESAPAAAE) show a composition bias toward low complexity.

The protein belongs to the bacterial ribosomal protein bL21 family. As to quaternary structure, part of the 50S ribosomal subunit. Contacts protein L20.

Its function is as follows. This protein binds to 23S rRNA in the presence of protein L20. The polypeptide is Large ribosomal subunit protein bL21 (Methylorubrum extorquens (strain CM4 / NCIMB 13688) (Methylobacterium extorquens)).